The following is a 751-amino-acid chain: Cytosolic neutral trehalase (751 aa).

Polar residues predominate over residues 1-10; the sequence is MSQVNTSQGP. A disordered region spans residues 1 to 59; that stretch reads MSQVNTSQGPVAQGRQRRLSSLSEFNDPFSNAEVYYGPPTDPRKQKQAKPAKINRTRTM. Residue Ser-2 is modified to N-acetylserine. Residues Ser-20 and Ser-21 each carry the phosphoserine; by PKA modification. Ser-23 bears the Phosphoserine mark. Residues 45–55 are compositionally biased toward basic residues; the sequence is QKQAKPAKINR. Thr-58 carries the post-translational modification Phosphothreonine. Ser-60 carries the post-translational modification Phosphoserine; by PKA. Ser-66 bears the Phosphoserine mark. Residues 73-92 form a disordered region; the sequence is FGKLQQTRRGSEDDTYSSSQ. A Phosphoserine; by PKA modification is found at Ser-83. Residues Asp-114, Asp-116, Asn-118, Gln-120, and Asp-125 each contribute to the Ca(2+) site. Residues Arg-302, 309–310, Asn-346, 355–357, Glu-424, Arg-473, and Gly-476 each bind substrate; these read WD and RSQ. Residues Asp-478 and Glu-674 each act as proton donor/acceptor in the active site.

It belongs to the glycosyl hydrolase 37 family. Monomer. Interacts with BMH1 dimers; the interaction is direct and activates NTH1. Interacts with BMH2. Ca(2+) serves as cofactor. Post-translationally, phosphorylated by protein kinase A (PKA); phosphorylation at Ser-60 and Ser-83 is required for activation by the 14-3-3 proteins BMH1 and BMH2.

Its subcellular location is the cytoplasm. It catalyses the reaction alpha,alpha-trehalose + H2O = alpha-D-glucose + beta-D-glucose. It functions in the pathway carbohydrate degradation. Activated by calcium. Activated by protein kinase A (PKA)-mediated phosphorylation. Hydrolyzes intracellular trehalose to glucose. The disaccharide trehalose serves as a storage carbohydrate that is mobilized during nutrient stress. Regulates the level of trehalose as a protectant for cell integrity during heat stress. This Saccharomyces cerevisiae (strain ATCC 204508 / S288c) (Baker's yeast) protein is Cytosolic neutral trehalase.